A 142-amino-acid chain; its full sequence is 5a,11a-dehydrotetracycline/5a,11a-dehydrooxytetracycline reductase (142 aa).

Belongs to the pyridoxamine 5'-phosphate oxidase family.

The enzyme catalyses tetracycline + oxidized coenzyme F420-(gamma-L-Glu)(n) + H(+) = 5a,11a-dehydrotetracycline + reduced coenzyme F420-(gamma-L-Glu)(n). The catalysed reaction is oxytetracycline + oxidized coenzyme F420-(gamma-L-Glu)(n) + H(+) = 5a,11a-dehydrooxytetracycline + reduced coenzyme F420-(gamma-L-Glu)(n). It functions in the pathway antibiotic biosynthesis; oxytetracycline biosynthesis. Functionally, involved in the biosynthesis of the antibiotics tetracycline and oxytetracycline. Catalyzes the C(5) reduction of 5a,11a-dehydrooxytetracycline to yield oxytetracycline as a major product. Also catalyzes the C(12) reduction of 5a,11a-dehydrotetracycline (12-dehydrotetracycline) to produce tetracycline as a minor product. The chain is 5a,11a-dehydrotetracycline/5a,11a-dehydrooxytetracycline reductase from Streptomyces rimosus subsp. rimosus (strain ATCC 10970 / DSM 40260 / JCM 4667 / NRRL 2234).